A 1132-amino-acid polypeptide reads, in one-letter code: Myosin-binding protein C, fast-type (1132 aa).

The disordered stretch occupies residues 1–59 (MPEPSKAAPKKEAKKKEEKKEEKKEAPPPQEHKDEAPDDVHPPETPDPEGLFLSKPQNV). A compositionally biased stretch (basic and acidic residues) spans 9–44 (PKKEAKKKEEKKEEKKEAPPPQEHKDEAPDDVHPPE). Ig-like C2-type domains are found at residues 48–149 (PEGL…SIDV), 249–338 (SEAF…VKEP), 339–429 (PVTV…VEEK), 430–530 (QLEV…KQEP), and 531–630 (PKIH…VVDV). 2 consecutive Fibronectin type-III domains span residues 633–729 (PPQS…IAPT) and 731–826 (EPTH…IREI). The 94-residue stretch at 830-923 (PKIRLPRHLR…ATLRLRVVER (94 aa)) folds into the Ig-like C2-type 6 domain. A Fibronectin type-III 3 domain is found at 926–1022 (PPQAVRVMEV…HNTARIAKEG (97 aa)). The 94-residue stretch at 1039 to 1132 (PQFLTPLVDR…ECRLDVRVPQ (94 aa)) folds into the Ig-like C2-type 7 domain.

Belongs to the immunoglobulin superfamily. MyBP family.

In terms of biological role, thick filament-associated protein located in the crossbridge region of vertebrate striated muscle a bands. In vitro it binds MHC, F-actin and native thin filaments, and modifies the activity of actin-activated myosin ATPase. It may modulate muscle contraction or may play a more structural role. This Gallus gallus (Chicken) protein is Myosin-binding protein C, fast-type (MYBPC2).